Here is a 67-residue protein sequence, read N- to C-terminus: Prokaryotic ubiquitin-like protein Pup (67 aa).

Residues 1 to 13 show a composition bias toward low complexity; the sequence is MAGQEQQQPQSRD. A disordered region spans residues 1–48; the sequence is MAGQEQQQPQSRDSQVDEDIPEAPPAPPEAQASASTEGVDDLLDEIDG. Residues 25–61 are ARC ATPase binding; that stretch reads PAPPEAQASASTEGVDDLLDEIDGVLESNAEEFVRAF. The segment covering 38 to 48 has biased composition (acidic residues); the sequence is GVDDLLDEIDG. Position 67 is a deamidated glutamine (glutamine 67). Glutamine 67 participates in a covalent cross-link: Isoglutamyl lysine isopeptide (Gln-Lys) (interchain with K-? in acceptor proteins).

The protein belongs to the prokaryotic ubiquitin-like protein family. As to quaternary structure, strongly interacts with the proteasome-associated ATPase ARC through a hydrophobic interface; the interacting region of Pup lies in its C-terminal half. There is one Pup binding site per ARC hexamer ring. Is modified by deamidation of its C-terminal glutamine to glutamate by the deamidase Dop, a prerequisite to the subsequent pupylation process.

Its pathway is protein degradation; proteasomal Pup-dependent pathway. Functionally, protein modifier that is covalently attached to lysine residues of substrate proteins, thereby targeting them for proteasomal degradation. The tagging system is termed pupylation. In Pseudarthrobacter chlorophenolicus (strain ATCC 700700 / DSM 12829 / CIP 107037 / JCM 12360 / KCTC 9906 / NCIMB 13794 / A6) (Arthrobacter chlorophenolicus), this protein is Prokaryotic ubiquitin-like protein Pup.